The following is a 195-amino-acid chain: Toxin protein Tse4 (195 aa).

Transmembrane regions (helical) follow at residues 20-40 (ASGG…ITLL), 116-136 (YVEL…LFGL), 140-160 (LLAA…GASM), and 171-191 (ALLM…AAYL).

The protein localises to the host membrane. It is found in the secreted. Functionally, toxin secreted by the H1 type VI (H1-T6SS) secretion system into the periplasm of recipient cells. This chain is Toxin protein Tse4, found in Pseudomonas aeruginosa (strain ATCC 15692 / DSM 22644 / CIP 104116 / JCM 14847 / LMG 12228 / 1C / PRS 101 / PAO1).